Here is a 271-residue protein sequence, read N- to C-terminus: Elongation factor Ts (271 aa).

Residues 76–79 are involved in Mg(2+) ion dislocation from EF-Tu; it reads TDFV.

It belongs to the EF-Ts family.

It is found in the cytoplasm. Functionally, associates with the EF-Tu.GDP complex and induces the exchange of GDP to GTP. It remains bound to the aminoacyl-tRNA.EF-Tu.GTP complex up to the GTP hydrolysis stage on the ribosome. This Mycolicibacterium vanbaalenii (strain DSM 7251 / JCM 13017 / BCRC 16820 / KCTC 9966 / NRRL B-24157 / PYR-1) (Mycobacterium vanbaalenii) protein is Elongation factor Ts.